The following is a 246-amino-acid chain: MRILLSNDDGYFAPGLAALAEALDGLGEVVVVAPEQNRSGASNSLTLDRPLLLKKAATGFYFVNGTPTDCVHLAVTGMLDKLPDIIVSGINLGANMGDDTIYSGTVAAATEGYLLGIPSIAISMTSFEGNNFASAARVARELVERFIRNPISEPVLLNVNVPDISYSDLKGTEVTRLGRRHKAEPVVKMQSPRNETVYWVGAAGAAADAGPGTDFNAVERGFVSITPLQIDLTHSAQLSHIDQWMK.

Residues Asp-8, Asp-9, Ser-39, and Asn-91 each contribute to the a divalent metal cation site.

Belongs to the SurE nucleotidase family. Requires a divalent metal cation as cofactor.

The protein resides in the cytoplasm. It carries out the reaction a ribonucleoside 5'-phosphate + H2O = a ribonucleoside + phosphate. Its function is as follows. Nucleotidase that shows phosphatase activity on nucleoside 5'-monophosphates. This is 5'-nucleotidase SurE from Dechloromonas aromatica (strain RCB).